The primary structure comprises 127 residues: MAKLSQDDLLAQFEEMTLIELSEFVKAFEEKFDVTAAAAVAVAGPAAGGAPAEAEAEQDEFDVILTGAGEKKIQVIKVVRELTSLGLKEAKDLVDGTPKPVLEKVAKEAAEKAAESLKAAGASVEVK.

The protein belongs to the bacterial ribosomal protein bL12 family. As to quaternary structure, homodimer. Part of the ribosomal stalk of the 50S ribosomal subunit. Forms a multimeric L10(L12)X complex, where L10 forms an elongated spine to which 2 to 4 L12 dimers bind in a sequential fashion. Binds GTP-bound translation factors.

In terms of biological role, forms part of the ribosomal stalk which helps the ribosome interact with GTP-bound translation factors. Is thus essential for accurate translation. The protein is Large ribosomal subunit protein bL12 of Streptomyces griseus subsp. griseus (strain JCM 4626 / CBS 651.72 / NBRC 13350 / KCC S-0626 / ISP 5235).